Reading from the N-terminus, the 227-residue chain is ATP phosphoribosyltransferase (227 aa).

The protein belongs to the ATP phosphoribosyltransferase family. Short subfamily. As to quaternary structure, heteromultimer composed of HisG and HisZ subunits.

The protein resides in the cytoplasm. It carries out the reaction 1-(5-phospho-beta-D-ribosyl)-ATP + diphosphate = 5-phospho-alpha-D-ribose 1-diphosphate + ATP. Its pathway is amino-acid biosynthesis; L-histidine biosynthesis; L-histidine from 5-phospho-alpha-D-ribose 1-diphosphate: step 1/9. Catalyzes the condensation of ATP and 5-phosphoribose 1-diphosphate to form N'-(5'-phosphoribosyl)-ATP (PR-ATP). Has a crucial role in the pathway because the rate of histidine biosynthesis seems to be controlled primarily by regulation of HisG enzymatic activity. The polypeptide is ATP phosphoribosyltransferase (Bordetella avium (strain 197N)).